Consider the following 244-residue polypeptide: 5-oxoprolinase subunit A (244 aa).

The protein belongs to the LamB/PxpA family. Forms a complex composed of PxpA, PxpB and PxpC.

The enzyme catalyses 5-oxo-L-proline + ATP + 2 H2O = L-glutamate + ADP + phosphate + H(+). Functionally, catalyzes the cleavage of 5-oxoproline to form L-glutamate coupled to the hydrolysis of ATP to ADP and inorganic phosphate. This Salmonella agona (strain SL483) protein is 5-oxoprolinase subunit A.